The primary structure comprises 333 residues: L-lactate dehydrogenase A chain (333 aa).

Residues 30–58 (GMVGMAAAISILLKDLTDELALVDVMEDK) and R100 contribute to the NAD(+) site. The substrate site is built by R107, N139, and R170. Residue N139 participates in NAD(+) binding. H194 serves as the catalytic Proton acceptor. T249 lines the substrate pocket.

The protein belongs to the LDH/MDH superfamily. LDH family. Homotetramer.

It localises to the cytoplasm. It carries out the reaction (S)-lactate + NAD(+) = pyruvate + NADH + H(+). The protein operates within fermentation; pyruvate fermentation to lactate; (S)-lactate from pyruvate: step 1/1. The chain is L-lactate dehydrogenase A chain (ldha) from Cyprinus carpio (Common carp).